The sequence spans 265 residues: Putative carbamate hydrolase RutD (265 aa).

An AB hydrolase-1 domain is found at 14–123 (PTLVLSSGLG…WSSPNPHSAR (110 aa)).

This sequence belongs to the AB hydrolase superfamily. Hydrolase RutD family.

It carries out the reaction carbamate + 2 H(+) = NH4(+) + CO2. Its function is as follows. Involved in pyrimidine catabolism. May facilitate the hydrolysis of carbamate, a reaction that can also occur spontaneously. The polypeptide is Putative carbamate hydrolase RutD (Stutzerimonas stutzeri (strain A1501) (Pseudomonas stutzeri)).